The primary structure comprises 329 residues: Malate dehydrogenase (329 aa).

Residue 12 to 18 coordinates NAD(+); it reads GAAGQIG. Residues Arg95 and Arg101 each contribute to the substrate site. NAD(+)-binding positions include Asn108, Gln115, and 132–134; that span reads VGN. Substrate-binding residues include Asn134 and Arg165. His190 serves as the catalytic Proton acceptor.

The protein belongs to the LDH/MDH superfamily. MDH type 2 family.

It carries out the reaction (S)-malate + NAD(+) = oxaloacetate + NADH + H(+). Catalyzes the reversible oxidation of malate to oxaloacetate. This is Malate dehydrogenase from Bordetella petrii (strain ATCC BAA-461 / DSM 12804 / CCUG 43448).